Consider the following 1314-residue polypeptide: MPSYHNTDKTLLGDARQSLQQAVDYSLGCQQPDGHWVAPVMADATFTAQYVFFKHQIPELSLDEDGPEIQRWLLGEQTADGSWTLAPDLPGNLSTTVEAYLALRILGVPKSDQAMLRARDFVVRNGGVEGVRFFTRFFLATFGLVPWTAIPQMPAELILLPTFMFLNIYVLSSWARSTLIPILLVRHHEPVYALPNGQSANNNFLDELWCNPGEKNIPFALPLWDLLRRYQWIEFAFTLLDHILALFGGLRRWPCRHMALKRCTAWLLEHQEESGDWAGFFPPIHGSIWALLLDGFSFQSEVIRLGMEALERLVVIDPKGKWVQSTVSPCWDTALMANALCDAGMSGDTRLAKATQWLRDRQLMVSHGDWRNYANTQQAGGWSFQYFNSFYPDVDDTAVVIMTLIKEDPNCTNSDCVMNGVEWMLGMQSRDGGWGAFDVNNNARWLHKIPFSDMDSLVDPSTSDVTGRILECLGLLLSQRKSPLSPRWRHRLQASSAKAIAFLAKEQESSGAWWGRWGNNYHYGTANVLRGLAWFAQTDPSAQMMCMRTLSWIDETQNADGGWGETLASYVDKSLAGLGRSTAAHTAWALESLLRFRLPSDQAIERGVRWLIDNQQPNVDGYYYGTKWQAGAGQGASWRFDHAYVGTGFPSVLYLGYPYYHHLFPIQALSRYIDKASRQGIETLRIPSSSAVILDRPNVLLMAMGSRGDIQVFLNVTKRLSSCRVRIATHPAHQAKVEGHGFEFYDVGGSPEVFSAALANGHGILRSIIDGRFRELQHLLRSIYRSFWVAALDDVQSHSPLKPESSSRPFIADVVVSGPSTSVHVHAAERAQAPLVIISTQPAIITGDFQSPLTMSRAQFNPSRLWNRISFHMLAFFDWLSFGPSFNRMRANSYQLRSLDLAWALFEFVKVSVPHVCLWSTSLAPKPEDWDNNVIIAGYSSMSDDADDVASKSLQAFLETRQPVVAISFGSATIEDPMKLIKLMSAALVKVGASSVVCRSWDSSFEAEADLPSNVFLVDSIPHGWLLQHVEGFVHHGGAGHTAAGAKAGVSQLVMPQFLDQFFWATKVSEMGLGPTPLPLRELFLDELAPRMEDLLSSKYTKACTNMALQLRGDVDGADVAGDEILRQVEAITTCCIFPELSAHWYCTESDLSLSGAAAASLVSSKEIQWQDLELRPAKDWEQQWRTVRSSSNLVRIWRAIVQLLYGFTTTILALFGWLKGTHGYLDGDRHLIKMEDPLRQARLEQAQFDLHLIHQACDSGSSTSLDAKIIENWKARKAVVIHEVFDDDSGASESSRSSLDGGHADSVLDIEEK.

Residues 1–680 (MPSYHNTDKT…RYIDKASRQG (680 aa)) are terpenne cyclase. PFTB repeat units lie at residues 19 to 62 (LQQA…ELSL) and 66 to 107 (GPEI…RILG). 3 helical membrane-spanning segments follow: residues 133–153 (FFTR…IPQM), 155–175 (AELI…SSWA), and 230–250 (YQWI…FGGL). The PFTB 3 repeat unit spans residues 260-300 (LKRCTAWLLEHQEESGDWAGFFPPIHGSIWALLLDGFSFQS). Aspartate 395 functions as the Proton donor in the catalytic mechanism. PFTB repeat units follow at residues 417–458 (VMNG…DSLV) and 546–597 (CMRT…LRFR). A glycosyltransferase region spans residues 681-1314 (IETLRIPSSS…ADSVLDIEEK (634 aa)). Residues 1200-1220 (AIVQLLYGFTTTILALFGWLK) form a helical membrane-spanning segment. The segment at 1289-1314 (DSGASESSRSSLDGGHADSVLDIEEK) is disordered. Residues 1292–1302 (ASESSRSSLDG) are compositionally biased toward low complexity.

This sequence in the N-terminal section; belongs to the terpene cyclase/mutase family. In the C-terminal section; belongs to the glycosyltransferase 28 family.

The protein localises to the membrane. Its pathway is secondary metabolite biosynthesis; terpenoid biosynthesis. Terpene cyclase-glycosyl transferase fusion protein; part of the gene cluster that mediates the biosynthesis of enfumafungin, a glycosylated fernene-type triterpenoid with potent antifungal activity, mediated by its interaction with beta-1,3-glucan synthase and the fungal cell wall. The pathway begins with the terpene cyclase-glycosyl transferase fusion protein that most likely uses 2,3-oxidosqualene as substrate and catalyzes glycosylation immediately after cyclization. The fernene glycoside then could be processed by the desaturase efuI which catalyzes isomerization of a double bond established by efuA to form the core structure. The latter would then undergo a series of hydroxylations in unknown order at C-2, C-19, C-23 and C-25, which would be catalyzed by two of the three cytochrome P450 monooxygenases efuB, efuG or efuH. The hydroxy-group at C-25 becomes oxidized by the dehydrogenase efuE to enable a spontaneous, non-enzymatic hemiacetal formation with C-23. After hydroxylation at C-2, acetylation by the acetyltransferase efuC takes place. The final steps in enfumafungin biosynthesis require expansion of the 5-membered ring by lactonization via a Baeyer-Villiger reaction mediated by one of the BGC's cytochrome P450 monooxygenases (efuB, efuG or efuH) followed by ring cleavage. This type of reaction would establish a double bond between C-20 and C-21 which could be reduced by the reductase efuL to form the final product. The protein is Enfumafungin synthase efuA of Hormonema carpetanum.